The following is an 841-amino-acid chain: Axin-1 (841 aa).

The segment at M1–P78 is disordered. A compositionally biased stretch (polar residues) spans F44–P61. Residues S88–T211 enclose the RGS domain. The disordered stretch occupies residues S217–Q269. The segment covering K248 to R259 has biased composition (basic and acidic residues). The tract at residues L348–V433 is interaction with GSK3B. The tract at residues I434–K508 is interaction with beta-catenin. 3 disordered regions span residues K482–S527, N613–D635, and R727–S756. Residues R727–A736 show a composition bias toward basic and acidic residues. In terms of domain architecture, DIX spans C759–D841.

Homodimer. In terms of processing, ADP-ribosylated by tankyrase TNKS and TNKS2. Poly-ADP-ribosylated protein is recognized by RNF146, followed by ubiquitination at 'Lys-48' and subsequent activation of the Wnt signaling pathway. Post-translationally, ubiquitinated by RNF146 when poly-ADP-ribosylated, leading to its degradation and subsequent activation of the Wnt signaling pathway.

The protein resides in the cytoplasm. Its subcellular location is the nucleus. It is found in the membrane. It localises to the cell membrane. Its function is as follows. Component of the beta-catenin destruction complex required for regulating CTNNB1 levels through phosphorylation and ubiquitination, and modulating Wnt-signaling. Controls dorsoventral patterning via two opposing effects; down-regulates CTNNB1 to inhibit the Wnt signaling pathway and ventralize embryos, but also dorsalizes embryos by activating a Wnt-independent JNK signaling pathway. The sequence is that of Axin-1 (AXIN1) from Gallus gallus (Chicken).